The following is a 29-amino-acid chain: Cliotide T18 (29 aa).

A cross-link (cyclopeptide (Gly-Asn)) is located at residues 1 to 29 (GLPICGETCFTGTCYTPGCTCSYPVCKKN). 3 disulfides stabilise this stretch: C5–C19, C9–C21, and C14–C26.

Post-translationally, contains 3 disulfide bonds. This is a cyclic peptide. In terms of tissue distribution, expressed in root nodules but not in seed.

Functionally, probably participates in a plant defense mechanism. This Clitoria ternatea (Butterfly pea) protein is Cliotide T18.